Consider the following 389-residue polypeptide: NAD-dependent protein deacetylase sirtuin-2 (389 aa).

Positions 1 to 34 (MAEPDPSHPLETQAGKVQEAQDSDSDSEGGAAGG) are disordered. An N-acetylalanine modification is found at Ala2. Ser23, Ser25, and Ser27 each carry phosphoserine. The short motif at 41–51 (LRNLFSQTLSL) is the Nuclear export signal element. Residue Ser53 is modified to Phosphoserine. Residues 57 to 338 (RLLDELTLEG…LALAELLGWK (282 aa)) form the Deacetylase sirtuin-type domain. NAD(+)-binding positions include 85–89 (AGIST) and 95–97 (DFR). The residue at position 100 (Ser100) is a Phosphoserine. 167–170 (QNID) lines the NAD(+) pocket. His187 (proton acceptor) is an active-site residue. The Zn(2+) site is built by Cys195 and Cys200. Residue Ser207 is modified to Phosphoserine. Zn(2+) contacts are provided by Cys221 and Cys224. NAD(+) is bound by residues 262–263 (TS), 286–288 (NKE), and Cys324. The interval 351–389 (SIDAQSGAGVPNPSTSASPKKSPPPAKDEARTTEREKPQ) is disordered. Low complexity predominate over residues 361 to 370 (PNPSTSASPK). Phosphoserine; by CDK2 and CDK5 is present on Ser368. The residue at position 372 (Ser372) is a Phosphoserine. Positions 376-389 (AKDEARTTEREKPQ) are enriched in basic and acidic residues.

The protein belongs to the sirtuin family. Class I subfamily. In terms of assembly, interacts with CDC20, FOXO3 and FZR1. Associates with microtubules in primary cortical mature neurons. Homotrimer. Isoform 1 and isoform 2 interact (via both phosphorylated, unphosphorylated, active or inactive forms) with HDAC6; the interaction is necessary for the complex to interact with alpha-tubulin, suggesting that these proteins belong to a large complex that deacetylates the cytoskeleton. Interacts with FOXO1; the interaction is disrupted upon serum-starvation or oxidative stress, leading to increased level of acetylated FOXO1 and induction of autophagy. Interacts with RELA; the interaction occurs in the cytoplasm and is increased in a TNF-alpha-dependent manner. Interacts with HOXA10; the interaction is direct. Interacts with YWHAB and YWHAG; the interactions occur in a AKT-dependent manner and increase SIRT2-dependent TP53 deacetylation. Interacts with MAPK1/ERK2 and MAPK3/ERK1; the interactions increase SIRT2 stability and deacetylation activity. Interacts (phosphorylated form) with KMT5A isoform 2; the interaction is direct, stimulates KMT5A-mediated methyltransferase activity on histone at 'Lys-20' (H4K20me1) and is increased in a H(2)O(2)-induced oxidative stress-dependent manner. Interacts with G6PD; the interaction is enhanced by H(2)O(2) treatment. Interacts with a G1/S-specific cyclin E-CDK2 complex. Interacts with AURKA, CDK5R1 (p35 form) and CDK5 and HIF1A. Isoform 1, isoform 2 and isoform 5 interact (via C-terminus region) with EP300. Interacts with the tRNA ligase SARS1; recruited to the VEGFA promoter via interaction with SARS1. Interacts with BEX4; negatively regulates alpha-tubulin deacetylation by SIRT2. Requires Zn(2+) as cofactor. In terms of processing, phosphorylated at phosphoserine and phosphothreonine. Phosphorylated at Ser-368 by a mitotic kinase CDK1/cyclin B at the G2/M transition; phosphorylation regulates the delay in cell-cycle progression. Phosphorylated at Ser-368 by a mitotic kinase G1/S-specific cyclin E/Cdk2 complex; phosphorylation inactivates SIRT2-mediated alpha-tubulin deacetylation and thereby negatively regulates cell adhesion, cell migration and neurite outgrowth during neuronal differentiation. Phosphorylated by cyclin A/Cdk2 and p35-Cdk5 complexes and to a lesser extent by the cyclin D3/Cdk4 and cyclin B/Cdk1, in vitro. Dephosphorylated at Ser-368 by CDC14A and CDC14B around early anaphase. Post-translationally, acetylated by EP300; acetylation leads both to the decreased of SIRT2-mediated alpha-tubulin deacetylase activity and SIRT2-mediated down-regulation of TP53 transcriptional activity. Ubiquitinated. In terms of tissue distribution, isoform 1 is expressed in heart, liver and skeletal muscle, weakly expressed in the cortex. Isoform 2 is strongly expressed in the cortex, weakly expressed in heart and liver. Weakly expressed in several malignancies including breast, liver, brain, kidney and prostate cancers compared to normal tissues. Weakly expressed in glioma cell lines compared to normal brain tissues (at protein level). Widely expressed. Highly expressed in heart, brain and skeletal muscle, while it is weakly expressed in placenta and lung. Down-regulated in many gliomas suggesting that it may act as a tumor suppressor gene in human gliomas possibly through the regulation of microtubule network.

It localises to the nucleus. The protein localises to the cytoplasm. The protein resides in the perinuclear region. It is found in the cytoskeleton. Its subcellular location is the microtubule organizing center. It localises to the centrosome. The protein localises to the centriole. The protein resides in the spindle. It is found in the midbody. Its subcellular location is the chromosome. It localises to the perikaryon. The protein localises to the cell projection. The protein resides in the growth cone. It is found in the myelin membrane. It carries out the reaction N(6)-acetyl-L-lysyl-[protein] + NAD(+) + H2O = 2''-O-acetyl-ADP-D-ribose + nicotinamide + L-lysyl-[protein]. It catalyses the reaction N(6)-tetradecanoyl-L-lysyl-[protein] + NAD(+) + H2O = 2''-O-tetradecanoyl-ADP-D-ribose + nicotinamide + L-lysyl-[protein]. The catalysed reaction is N(6)-hexadecanoyl-L-lysyl-[protein] + NAD(+) + H2O = 2''-O-hexadecanoyl-ADP-D-ribose + nicotinamide + L-lysyl-[protein]. Its activity is regulated as follows. Inhibited by Sirtinol, A3 and M15 small molecules. Inhibited by nicotinamide. Inhibited by a macrocyclic peptide inhibitor S2iL5. Inhibited by EP300-induced acetylation. NAD-dependent protein deacetylase, which deacetylates internal lysines on histone and alpha-tubulin as well as many other proteins such as key transcription factors. Participates in the modulation of multiple and diverse biological processes such as cell cycle control, genomic integrity, microtubule dynamics, cell differentiation, metabolic networks, and autophagy. Plays a major role in the control of cell cycle progression and genomic stability. Functions in the antephase checkpoint preventing precocious mitotic entry in response to microtubule stress agents, and hence allowing proper inheritance of chromosomes. Positively regulates the anaphase promoting complex/cyclosome (APC/C) ubiquitin ligase complex activity by deacetylating CDC20 and FZR1, then allowing progression through mitosis. Associates both with chromatin at transcriptional start sites (TSSs) and enhancers of active genes. Plays a role in cell cycle and chromatin compaction through epigenetic modulation of the regulation of histone H4 'Lys-20' methylation (H4K20me1) during early mitosis. Specifically deacetylates histone H4 at 'Lys-16' (H4K16ac) between the G2/M transition and metaphase enabling H4K20me1 deposition by KMT5A leading to ulterior levels of H4K20me2 and H4K20me3 deposition throughout cell cycle, and mitotic S-phase progression. Deacetylates KMT5A modulating KMT5A chromatin localization during the mitotic stress response. Also deacetylates histone H3 at 'Lys-57' (H3K56ac) during the mitotic G2/M transition. Upon bacterium Listeria monocytogenes infection, deacetylates 'Lys-18' of histone H3 in a receptor tyrosine kinase MET- and PI3K/Akt-dependent manner, thereby inhibiting transcriptional activity and promoting late stages of listeria infection. During oocyte meiosis progression, may deacetylate histone H4 at 'Lys-16' (H4K16ac) and alpha-tubulin, regulating spindle assembly and chromosome alignment by influencing microtubule dynamics and kinetochore function. Deacetylates histone H4 at 'Lys-16' (H4K16ac) at the VEGFA promoter and thereby contributes to regulate expression of VEGFA, a key regulator of angiogenesis. Deacetylates alpha-tubulin at 'Lys-40' and hence controls neuronal motility, oligodendroglial cell arbor projection processes and proliferation of non-neuronal cells. Phosphorylation at Ser-368 by a G1/S-specific cyclin E-CDK2 complex inactivates SIRT2-mediated alpha-tubulin deacetylation, negatively regulating cell adhesion, cell migration and neurite outgrowth during neuronal differentiation. Deacetylates PARD3 and participates in the regulation of Schwann cell peripheral myelination formation during early postnatal development and during postinjury remyelination. Involved in several cellular metabolic pathways. Plays a role in the regulation of blood glucose homeostasis by deacetylating and stabilizing phosphoenolpyruvate carboxykinase PCK1 activity in response to low nutrient availability. Acts as a key regulator in the pentose phosphate pathway (PPP) by deacetylating and activating the glucose-6-phosphate G6PD enzyme, and therefore, stimulates the production of cytosolic NADPH to counteract oxidative damage. Maintains energy homeostasis in response to nutrient deprivation as well as energy expenditure by inhibiting adipogenesis and promoting lipolysis. Attenuates adipocyte differentiation by deacetylating and promoting FOXO1 interaction to PPARG and subsequent repression of PPARG-dependent transcriptional activity. Plays a role in the regulation of lysosome-mediated degradation of protein aggregates by autophagy in neuronal cells. Deacetylates FOXO1 in response to oxidative stress or serum deprivation, thereby negatively regulating FOXO1-mediated autophagy. Deacetylates a broad range of transcription factors and co-regulators regulating target gene expression. Deacetylates transcriptional factor FOXO3 stimulating the ubiquitin ligase SCF(SKP2)-mediated FOXO3 ubiquitination and degradation. Deacetylates HIF1A and therefore promotes HIF1A degradation and inhibition of HIF1A transcriptional activity in tumor cells in response to hypoxia. Deacetylates RELA in the cytoplasm inhibiting NF-kappaB-dependent transcription activation upon TNF-alpha stimulation. Inhibits transcriptional activation by deacetylating p53/TP53 and EP300. Also deacetylates EIF5A. Functions as a negative regulator on oxidative stress-tolerance in response to anoxia-reoxygenation conditions. Plays a role as tumor suppressor. In addition to protein deacetylase activity, also has activity toward long-chain fatty acyl groups and mediates protein-lysine demyristoylation and depalmitoylation of target proteins, such as ARF6 and KRAS, thereby regulating their association with membranes. In terms of biological role, deacetylates EP300, alpha-tubulin and histone H3 and H4. Its function is as follows. Lacks deacetylation activity, at least toward known SIRT2 targets. The polypeptide is NAD-dependent protein deacetylase sirtuin-2 (SIRT2) (Homo sapiens (Human)).